The chain runs to 254 residues: 4-hydroxy-tetrahydrodipicolinate reductase (254 aa).

An NAD(+)-binding site is contributed by 8–13 (GAFGRM). NADP(+) is bound at residue Lys36. NAD(+)-binding positions include 89–91 (GTT) and 115–118 (STNY). Residue His147 is the Proton donor/acceptor of the active site. His148 lines the (S)-2,3,4,5-tetrahydrodipicolinate pocket. Lys151 functions as the Proton donor in the catalytic mechanism. 157–158 (GT) contacts (S)-2,3,4,5-tetrahydrodipicolinate.

The protein belongs to the DapB family.

The protein resides in the cytoplasm. It catalyses the reaction (S)-2,3,4,5-tetrahydrodipicolinate + NAD(+) + H2O = (2S,4S)-4-hydroxy-2,3,4,5-tetrahydrodipicolinate + NADH + H(+). The catalysed reaction is (S)-2,3,4,5-tetrahydrodipicolinate + NADP(+) + H2O = (2S,4S)-4-hydroxy-2,3,4,5-tetrahydrodipicolinate + NADPH + H(+). The protein operates within amino-acid biosynthesis; L-lysine biosynthesis via DAP pathway; (S)-tetrahydrodipicolinate from L-aspartate: step 4/4. Its function is as follows. Catalyzes the conversion of 4-hydroxy-tetrahydrodipicolinate (HTPA) to tetrahydrodipicolinate. This chain is 4-hydroxy-tetrahydrodipicolinate reductase, found in Methanospirillum hungatei JF-1 (strain ATCC 27890 / DSM 864 / NBRC 100397 / JF-1).